Consider the following 523-residue polypeptide: NAD(P)H-quinone oxidoreductase subunit 2 (523 aa).

Helical transmembrane passes span 29–49, 57–77, 94–114, 128–148, 182–202, 223–243, 255–275, 291–311, 317–337, 345–365, 389–409, 424–444, and 477–497; these read AVAP…VDLA, WVPP…ALQW, LAIA…MISW, AGIL…TDLV, LLVG…LYGL, AALA…AVPF, PTPV…ALAL, LLFT…ALAQ, MLAY…VCGT, VLYT…IILF, LGLS…GFFG, VLVV…IGVI, and VALV…NPLF.

Belongs to the complex I subunit 2 family. NDH-1 can be composed of about 15 different subunits; different subcomplexes with different compositions have been identified which probably have different functions.

It is found in the cellular thylakoid membrane. It catalyses the reaction a plastoquinone + NADH + (n+1) H(+)(in) = a plastoquinol + NAD(+) + n H(+)(out). The catalysed reaction is a plastoquinone + NADPH + (n+1) H(+)(in) = a plastoquinol + NADP(+) + n H(+)(out). Its function is as follows. NDH-1 shuttles electrons from an unknown electron donor, via FMN and iron-sulfur (Fe-S) centers, to quinones in the respiratory and/or the photosynthetic chain. The immediate electron acceptor for the enzyme in this species is believed to be plastoquinone. Couples the redox reaction to proton translocation, and thus conserves the redox energy in a proton gradient. Cyanobacterial NDH-1 also plays a role in inorganic carbon-concentration. The polypeptide is NAD(P)H-quinone oxidoreductase subunit 2 (Synechococcus sp. (strain WH7803)).